A 217-amino-acid chain; its full sequence is Probable transaldolase (217 aa).

Catalysis depends on Lys-83, which acts as the Schiff-base intermediate with substrate.

It belongs to the transaldolase family. Type 3B subfamily.

It is found in the cytoplasm. The enzyme catalyses D-sedoheptulose 7-phosphate + D-glyceraldehyde 3-phosphate = D-erythrose 4-phosphate + beta-D-fructose 6-phosphate. It functions in the pathway carbohydrate degradation; pentose phosphate pathway; D-glyceraldehyde 3-phosphate and beta-D-fructose 6-phosphate from D-ribose 5-phosphate and D-xylulose 5-phosphate (non-oxidative stage): step 2/3. Its function is as follows. Transaldolase is important for the balance of metabolites in the pentose-phosphate pathway. The protein is Probable transaldolase of Novosphingobium aromaticivorans (strain ATCC 700278 / DSM 12444 / CCUG 56034 / CIP 105152 / NBRC 16084 / F199).